Here is a 464-residue protein sequence, read N- to C-terminus: MNWTVDIPIDQLPPLPPLSDELRQRLDSALAKPAVQQPSWDPDAAKAMRTVLESVPPVTVPSEIEKLKGLLADVAQGKAFLLQGGDCAETFVDNTEPHIRANIRTLLQMAVVLTYGASMPVVKVARIAGQYAKPRSSDVDALGLKSYRGDMINGFAPDAAAREHDPSRLVRAYANASAAMNLMRALTSSGLASLHLVHEWNREFVRTSPAGARYEALAGEIDRGLNFMSACGVADRNLQTAEIFASHEALVLDYERAMLRLSNPAETDGAAKLYDQSAHYLWIGERTRQLDGAHVAFAEVIANPIGVKLGPTTTPELAVEYVERLDPNNEPGRLTLVTRMGNNKVRDLLPPIIEKVQATGHQVIWQCDPMHGNTHESSTGYKTRHFDRIVDEVQGFFEVHHALGTHPGGIHVEITGENVTECLGGAQDISDSDLAGRYETACDPRLNTQQSLELAFLVAEMLRD.

C87 lines the Mn(2+) pocket. Phosphoenolpyruvate-binding positions include R126, 285-286 (ER), K308, and R339. Residues H371, E413, and D443 each coordinate Mn(2+).

This sequence belongs to the class-II DAHP synthase family. As to quaternary structure, homodimer. Probably interacts with MSMEG_5536. Mn(2+) is required as a cofactor. The cofactor is Co(2+). It depends on Cd(2+) as a cofactor.

The enzyme catalyses D-erythrose 4-phosphate + phosphoenolpyruvate + H2O = 7-phospho-2-dehydro-3-deoxy-D-arabino-heptonate + phosphate. It participates in metabolic intermediate biosynthesis; chorismate biosynthesis; chorismate from D-erythrose 4-phosphate and phosphoenolpyruvate: step 1/7. Its function is as follows. Catalyzes an aldol-like condensation reaction between phosphoenolpyruvate (PEP) and D-erythrose 4-phosphate (E4P) to generate 3-deoxy-D-arabino-heptulosonate 7-phosphate (DAH7P) and inorganic phosphate. The polypeptide is Phospho-2-dehydro-3-deoxyheptonate aldolase AroG (aroG) (Mycolicibacterium smegmatis (strain ATCC 700084 / mc(2)155) (Mycobacterium smegmatis)).